The following is a 648-amino-acid chain: Acetyl-coenzyme A synthetase (648 aa).

CoA is bound by residues 191–194, threonine 310, and asparagine 334; that span reads RGGR. Residues 386 to 388, 410 to 415, aspartate 499, and arginine 514 contribute to the ATP site; these read GEP and DTWWQT. Serine 522 contributes to the CoA binding site. Arginine 525 serves as a coordination point for ATP. Residues valine 536, histidine 538, and isoleucine 541 each coordinate Mg(2+). Arginine 583 serves as a coordination point for CoA. Lysine 608 is subject to N6-acetyllysine.

Belongs to the ATP-dependent AMP-binding enzyme family. Mg(2+) serves as cofactor. Acetylated. Deacetylation by the SIR2-homolog deacetylase activates the enzyme.

It carries out the reaction acetate + ATP + CoA = acetyl-CoA + AMP + diphosphate. Catalyzes the conversion of acetate into acetyl-CoA (AcCoA), an essential intermediate at the junction of anabolic and catabolic pathways. AcsA undergoes a two-step reaction. In the first half reaction, AcsA combines acetate with ATP to form acetyl-adenylate (AcAMP) intermediate. In the second half reaction, it can then transfer the acetyl group from AcAMP to the sulfhydryl group of CoA, forming the product AcCoA. This is Acetyl-coenzyme A synthetase from Aeromonas hydrophila subsp. hydrophila (strain ATCC 7966 / DSM 30187 / BCRC 13018 / CCUG 14551 / JCM 1027 / KCTC 2358 / NCIMB 9240 / NCTC 8049).